The sequence spans 523 residues: (R)-citramalate synthase (523 aa).

The region spanning 6–272 (VEVLDTTLRD…KGNESLKKLK (267 aa)) is the Pyruvate carboxyltransferase domain.

This sequence belongs to the alpha-IPM synthase/homocitrate synthase family.

It catalyses the reaction pyruvate + acetyl-CoA + H2O = (3R)-citramalate + CoA + H(+). It participates in amino-acid biosynthesis; L-isoleucine biosynthesis; 2-oxobutanoate from pyruvate: step 1/3. With respect to regulation, inhibited by isoleucine. Functionally, catalyzes the condensation of pyruvate and acetyl-coenzyme A to form (R)-citramalate. Makes part of a pathway for isoleucine biosynthesis, i.e. the citramalate-dependent pathway. Also displays a low alpha-isopropylmalate synthase activity, using 2-oxoisovalerate as substrate, but is unable to use 2-oxoglutarate. The chain is (R)-citramalate synthase from Sulfolobus acidocaldarius (strain ATCC 33909 / DSM 639 / JCM 8929 / NBRC 15157 / NCIMB 11770).